The primary structure comprises 134 residues: Fluoride-specific ion channel FluC 2 (134 aa).

Helical transmembrane passes span leucine 10–leucine 30, leucine 43–proline 63, leucine 67–alanine 87, and phenylalanine 100–leucine 120. Na(+)-binding residues include glycine 75 and threonine 78.

This sequence belongs to the fluoride channel Fluc/FEX (TC 1.A.43) family.

It is found in the cell inner membrane. The catalysed reaction is fluoride(in) = fluoride(out). With respect to regulation, na(+) is not transported, but it plays an essential structural role and its presence is essential for fluoride channel function. Fluoride-specific ion channel. Important for reducing fluoride concentration in the cell, thus reducing its toxicity. In Synechococcus sp. (strain CC9902), this protein is Fluoride-specific ion channel FluC 2.